A 267-amino-acid polypeptide reads, in one-letter code: Acyl-[acyl-carrier-protein]--UDP-N-acetylglucosamine O-acyltransferase (267 aa).

It belongs to the transferase hexapeptide repeat family. LpxA subfamily. In terms of assembly, homotrimer.

It is found in the cytoplasm. It carries out the reaction a (3R)-hydroxyacyl-[ACP] + UDP-N-acetyl-alpha-D-glucosamine = a UDP-3-O-[(3R)-3-hydroxyacyl]-N-acetyl-alpha-D-glucosamine + holo-[ACP]. It participates in glycolipid biosynthesis; lipid IV(A) biosynthesis; lipid IV(A) from (3R)-3-hydroxytetradecanoyl-[acyl-carrier-protein] and UDP-N-acetyl-alpha-D-glucosamine: step 1/6. Involved in the biosynthesis of lipid A, a phosphorylated glycolipid that anchors the lipopolysaccharide to the outer membrane of the cell. The chain is Acyl-[acyl-carrier-protein]--UDP-N-acetylglucosamine O-acyltransferase from Cupriavidus metallidurans (strain ATCC 43123 / DSM 2839 / NBRC 102507 / CH34) (Ralstonia metallidurans).